We begin with the raw amino-acid sequence, 518 residues long: Anthranilate synthase component 1 (518 aa).

L-tryptophan contacts are provided by residues Ser-38 and 283-285; that span reads PYM. Residue 324–325 coordinates chorismate; it reads GT. Glu-357 provides a ligand contact to Mg(2+). Chorismate contacts are provided by residues Tyr-445, Arg-465, 479-481, and Gly-481; that span reads GAG. Position 494 (Glu-494) interacts with Mg(2+).

It belongs to the anthranilate synthase component I family. Heterotetramer consisting of two non-identical subunits: a beta subunit (TrpG) and a large alpha subunit (TrpE). It depends on Mg(2+) as a cofactor.

The catalysed reaction is chorismate + L-glutamine = anthranilate + pyruvate + L-glutamate + H(+). The protein operates within amino-acid biosynthesis; L-tryptophan biosynthesis; L-tryptophan from chorismate: step 1/5. Its activity is regulated as follows. Feedback inhibited by tryptophan. Functionally, part of a heterotetrameric complex that catalyzes the two-step biosynthesis of anthranilate, an intermediate in the biosynthesis of L-tryptophan. In the first step, the glutamine-binding beta subunit (TrpG) of anthranilate synthase (AS) provides the glutamine amidotransferase activity which generates ammonia as a substrate that, along with chorismate, is used in the second step, catalyzed by the large alpha subunit of AS (TrpE) to produce anthranilate. In the absence of TrpG, TrpE can synthesize anthranilate directly from chorismate and high concentrations of ammonia. This Corynebacterium glutamicum (strain ATCC 13032 / DSM 20300 / JCM 1318 / BCRC 11384 / CCUG 27702 / LMG 3730 / NBRC 12168 / NCIMB 10025 / NRRL B-2784 / 534) protein is Anthranilate synthase component 1 (trpE).